Reading from the N-terminus, the 75-residue chain is Exodeoxyribonuclease 7 small subunit (75 aa).

Belongs to the XseB family. Heterooligomer composed of large and small subunits.

It is found in the cytoplasm. The catalysed reaction is Exonucleolytic cleavage in either 5'- to 3'- or 3'- to 5'-direction to yield nucleoside 5'-phosphates.. Bidirectionally degrades single-stranded DNA into large acid-insoluble oligonucleotides, which are then degraded further into small acid-soluble oligonucleotides. The chain is Exodeoxyribonuclease 7 small subunit from Chlamydia felis (strain Fe/C-56) (Chlamydophila felis).